The chain runs to 340 residues: Phenylalanine--tRNA ligase alpha subunit (340 aa).

E255 lines the Mg(2+) pocket.

This sequence belongs to the class-II aminoacyl-tRNA synthetase family. Phe-tRNA synthetase alpha subunit type 1 subfamily. As to quaternary structure, tetramer of two alpha and two beta subunits. Requires Mg(2+) as cofactor.

The protein localises to the cytoplasm. The enzyme catalyses tRNA(Phe) + L-phenylalanine + ATP = L-phenylalanyl-tRNA(Phe) + AMP + diphosphate + H(+). In Moorella thermoacetica (strain ATCC 39073 / JCM 9320), this protein is Phenylalanine--tRNA ligase alpha subunit.